A 795-amino-acid chain; its full sequence is MADPAAQSSAQPRLQQAQSSGPTGSNSNPGAGSSDPARPGLSQQQWSSQKKAQVRSFPRAKKLEKLGVFSSCKANDACKCNGWKNPNPPTAARMELQQQAASLTETCRSCGHSLAEHVSHLENVSEEEINRLLGMVVDVENLFMSVHKEEDTDTKQVYFYLFKLLRKCILQMGKPVVEGSLGSPPFEKPNIEQGVLNFVQYKFSHLAPKERQTMYELSKMFLLCLNYWKLETPSQFRQRAQKEDAAAYKVDYTRWLCYCHVPQSNDSLPRYETCQVFGRSLLKSIFTVTRRQLLEKFRVEKDKLPPEKRTLILTHFPKFLSMLEEEIYGENSPIWEADFTMPASEGTQLGHQTVLSPVSISGSPHSKGSSASALGVTGLDVASSEPTIGEKRKLPEALTLEDAKRIRVMGDIPMELVNEVMKTITDPAAMLGPETSLLSANAARDETARLEERRGIIEFHVIGNSLSQKSNKKILMWLVGLQNVFSHQLPRMPKEYITRLVFDPKHKTLALIKDGRVIGGICFRMFPTQGFTEIVFCAVTSNEQVKGYGTHLMNHLKEYHIKHGILYFLTYADEYAIGYFKKQGFSKDIKVPKSRYLGYIKDYEGATLMECELNPRIPYTELSHIIKRQKEIIKKLIERKQNQIRKVYPGLTCFKEGVRQIPVESIPGIRETGWKPSAKEKSKELKDPDLLYNMLKNLLAQIKTHPDAWPFMEPVKKSEAPDYYEVIRFPIDLKTMTERLKNRYYVTKKLFIADLQRVITNCREYNPPDSEYCKSANTLEKFFYFKLKEAGLIDK.

Residues 1-18 (MADPAAQSSAQPRLQQAQ) show a composition bias toward polar residues. Positions 1–55 (MADPAAQSSAQPRLQQAQSSGPTGSNSNPGAGSSDPARPGLSQQQWSSQKKAQVR) are disordered. The segment covering 19-34 (SSGPTGSNSNPGAGSS) has biased composition (low complexity). An N-acetyltransferase domain is found at 461-614 (VIGNSLSQKS…GATLMECELN (154 aa)). Glu533 functions as the Proton donor/acceptor in the catalytic mechanism. Acetyl-CoA contacts are provided by residues 537–539 (CAV), 544–550 (QVKGYGT), and Tyr575. Residues 537 to 539 (CAV), 544 to 550 (QVKGYGT), and Tyr575 each bind succinyl-CoA. The segment at 597–606 (LGYIKDYEGA) is loop 3. The Bromo domain maps to 686-790 (KDPDLLYNML…KFFYFKLKEA (105 aa)).

It belongs to the acetyltransferase family. GCN5 subfamily.

It localises to the nucleus. The protein localises to the chromosome. It is found in the cytoplasm. The protein resides in the cytoskeleton. Its subcellular location is the microtubule organizing center. It localises to the centrosome. The enzyme catalyses L-lysyl-[histone] + acetyl-CoA = N(6)-acetyl-L-lysyl-[histone] + CoA + H(+). It catalyses the reaction L-lysyl-[protein] + acetyl-CoA = N(6)-acetyl-L-lysyl-[protein] + CoA + H(+). It carries out the reaction succinyl-CoA + L-lysyl-[protein] = N(6)-succinyl-L-lysyl-[protein] + CoA + H(+). The catalysed reaction is glutaryl-CoA + L-lysyl-[protein] = N(6)-glutaryl-L-lysyl-[protein] + CoA + H(+). Its function is as follows. Protein lysine acyltransferase that can act as a acetyltransferase, glutaryltransferasesucc, succinyltransferase or malonyltransferase, depending on the context. Acts as a histone lysine succinyltransferase: catalyzes succinylation of histone H3 on 'Lys-79' (H3K79succ), with a maximum frequency around the transcription start sites of genes. Succinylation of histones gives a specific tag for epigenetic transcription activation. Association with the 2-oxoglutarate dehydrogenase complex, which provides succinyl-CoA, is required for histone succinylation. In different complexes, functions either as an acetyltransferase (HAT) or as a succinyltransferase: in the SAGA and ATAC complexes, acts as a histone acetyltransferase. Has significant histone acetyltransferase activity with core histones, but not with nucleosome core particles. Has a a strong preference for acetylation of H3 at 'Lys-9' (H3K9ac). Acetylation of histones gives a specific tag for epigenetic transcription activation. Also acetylates non-histone proteins, such as tbx5. Involved in heart and limb development by mediating acetylation of tbx5. Together with kat2b, required for growth and differentiation of craniofacial cartilage and bone by regulating acetylation of histone H3 at 'Lys-9' (H3K9ac). Also acts as a histone glutaryltransferase: catalyzes glutarylation of histone H4 on 'Lys-91' (H4K91glu), a mark that destabilizes nucleosomes by promoting dissociation of the H2A-H2B dimers from nucleosomes. The protein is Histone acetyltransferase KAT2A of Danio rerio (Zebrafish).